The primary structure comprises 61 residues: Small ribosomal subunit protein uS14B (61 aa).

Positions 24, 27, 40, and 43 each coordinate Zn(2+).

The protein belongs to the universal ribosomal protein uS14 family. Zinc-binding uS14 subfamily. As to quaternary structure, part of the 30S ribosomal subunit. Contacts proteins S3 and S10. The cofactor is Zn(2+).

Binds 16S rRNA, required for the assembly of 30S particles and may also be responsible for determining the conformation of the 16S rRNA at the A site. The protein is Small ribosomal subunit protein uS14B of Lactiplantibacillus plantarum (strain ATCC BAA-793 / NCIMB 8826 / WCFS1) (Lactobacillus plantarum).